The following is a 184-amino-acid chain: NADH-quinone oxidoreductase subunit B (184 aa).

Residues Cys-37, Cys-38, Cys-103, and Cys-132 each contribute to the [4Fe-4S] cluster site.

The protein belongs to the complex I 20 kDa subunit family. As to quaternary structure, NDH-1 is composed of 14 different subunits. Subunits NuoB, C, D, E, F, and G constitute the peripheral sector of the complex. The cofactor is [4Fe-4S] cluster.

Its subcellular location is the cell membrane. It catalyses the reaction a quinone + NADH + 5 H(+)(in) = a quinol + NAD(+) + 4 H(+)(out). Its function is as follows. NDH-1 shuttles electrons from NADH, via FMN and iron-sulfur (Fe-S) centers, to quinones in the respiratory chain. The immediate electron acceptor for the enzyme in this species is believed to be a menaquinone. Couples the redox reaction to proton translocation (for every two electrons transferred, four hydrogen ions are translocated across the cytoplasmic membrane), and thus conserves the redox energy in a proton gradient. In Mycobacterium bovis (strain BCG / Pasteur 1173P2), this protein is NADH-quinone oxidoreductase subunit B.